A 100-amino-acid chain; its full sequence is C-X-C motif chemokine 2 (100 aa).

The N-terminal stretch at 1 to 31 (MAPPTRQLLNAVLVLLLLLATNHQGTGVVVA) is a signal peptide. 2 disulfide bridges follow: cysteine 36/cysteine 62 and cysteine 38/cysteine 78.

This sequence belongs to the intercrine alpha (chemokine CxC) family. In terms of assembly, homotetramer. In terms of tissue distribution, at least expressed in the lung and trachea.

It localises to the secreted. In terms of biological role, chemotactic for human polymorphonuclear leukocytes but does not induce chemokinesis or an oxidative burst. Contributes to neutrophil activation during inflammation. The protein is C-X-C motif chemokine 2 (Cxcl2) of Rattus norvegicus (Rat).